The chain runs to 365 residues: Probable dual-specificity RNA methyltransferase RlmN (365 aa).

Glutamate 99 (proton acceptor) is an active-site residue. In terms of domain architecture, Radical SAM core spans 105 to 344 (QSYGLSVCVT…CVVRQEHGTD (240 aa)). The cysteines at positions 112 and 349 are disulfide-linked. [4Fe-4S] cluster-binding residues include cysteine 119, cysteine 123, and cysteine 126. Residues 171–172 (GE), serine 203, 227–229 (SLH), and asparagine 305 contribute to the S-adenosyl-L-methionine site. Cysteine 349 serves as the catalytic S-methylcysteine intermediate.

This sequence belongs to the radical SAM superfamily. RlmN family. Requires [4Fe-4S] cluster as cofactor.

It localises to the cytoplasm. The catalysed reaction is adenosine(2503) in 23S rRNA + 2 reduced [2Fe-2S]-[ferredoxin] + 2 S-adenosyl-L-methionine = 2-methyladenosine(2503) in 23S rRNA + 5'-deoxyadenosine + L-methionine + 2 oxidized [2Fe-2S]-[ferredoxin] + S-adenosyl-L-homocysteine. The enzyme catalyses adenosine(37) in tRNA + 2 reduced [2Fe-2S]-[ferredoxin] + 2 S-adenosyl-L-methionine = 2-methyladenosine(37) in tRNA + 5'-deoxyadenosine + L-methionine + 2 oxidized [2Fe-2S]-[ferredoxin] + S-adenosyl-L-homocysteine. Functionally, specifically methylates position 2 of adenine 2503 in 23S rRNA and position 2 of adenine 37 in tRNAs. The sequence is that of Probable dual-specificity RNA methyltransferase RlmN from Lactococcus lactis subsp. cremoris (strain MG1363).